Reading from the N-terminus, the 533-residue chain is Malate synthase A (533 aa).

Catalysis depends on Arg166, which acts as the Proton acceptor. Asp447 serves as the catalytic Proton donor.

This sequence belongs to the malate synthase family.

It is found in the cytoplasm. The enzyme catalyses glyoxylate + acetyl-CoA + H2O = (S)-malate + CoA + H(+). Its pathway is carbohydrate metabolism; glyoxylate cycle; (S)-malate from isocitrate: step 2/2. The polypeptide is Malate synthase A (aceB) (Escherichia coli (strain K12)).